A 446-amino-acid chain; its full sequence is Phosphoglucosamine mutase (446 aa).

Serine 101 acts as the Phosphoserine intermediate in catalysis. 4 residues coordinate Mg(2+): serine 101, aspartate 240, aspartate 242, and aspartate 244. Serine 101 is modified (phosphoserine).

The protein belongs to the phosphohexose mutase family. Requires Mg(2+) as cofactor. Activated by phosphorylation.

The enzyme catalyses alpha-D-glucosamine 1-phosphate = D-glucosamine 6-phosphate. In terms of biological role, catalyzes the conversion of glucosamine-6-phosphate to glucosamine-1-phosphate. The protein is Phosphoglucosamine mutase of Coxiella burnetii (strain CbuK_Q154) (Coxiella burnetii (strain Q154)).